The sequence spans 307 residues: Serine/threonine-protein phosphatase PP2A-3 catalytic subunit (307 aa).

4 residues coordinate Mn(2+): aspartate 55, histidine 57, aspartate 83, and asparagine 115. The Proton donor role is filled by histidine 116. Residues histidine 165 and histidine 239 each coordinate Mn(2+).

Belongs to the PPP phosphatase family. PP-2A subfamily. The cofactor is Mn(2+).

It localises to the cytoplasm. It carries out the reaction O-phospho-L-seryl-[protein] + H2O = L-seryl-[protein] + phosphate. The enzyme catalyses O-phospho-L-threonyl-[protein] + H2O = L-threonyl-[protein] + phosphate. The sequence is that of Serine/threonine-protein phosphatase PP2A-3 catalytic subunit (PP2A3) from Oryza sativa subsp. indica (Rice).